We begin with the raw amino-acid sequence, 315 residues long: Homoserine O-succinyltransferase (315 aa).

Catalysis depends on cysteine 142, which acts as the Acyl-thioester intermediate. Substrate-binding residues include lysine 163 and serine 192. Histidine 235 (proton acceptor) is an active-site residue. Glutamate 237 is an active-site residue. A substrate-binding site is contributed by arginine 249.

It belongs to the MetA family.

It localises to the cytoplasm. It carries out the reaction L-homoserine + succinyl-CoA = O-succinyl-L-homoserine + CoA. Its pathway is amino-acid biosynthesis; L-methionine biosynthesis via de novo pathway; O-succinyl-L-homoserine from L-homoserine: step 1/1. Transfers a succinyl group from succinyl-CoA to L-homoserine, forming succinyl-L-homoserine. The protein is Homoserine O-succinyltransferase of Shewanella piezotolerans (strain WP3 / JCM 13877).